The sequence spans 202 residues: LexA repressor (202 aa).

A DNA-binding region (H-T-H motif) is located at residues R27–R47. Residues S119 and K156 each act as for autocatalytic cleavage activity in the active site.

This sequence belongs to the peptidase S24 family. As to quaternary structure, homodimer.

The enzyme catalyses Hydrolysis of Ala-|-Gly bond in repressor LexA.. Its function is as follows. Represses a number of genes involved in the response to DNA damage (SOS response), including recA and lexA. In the presence of single-stranded DNA, RecA interacts with LexA causing an autocatalytic cleavage which disrupts the DNA-binding part of LexA, leading to derepression of the SOS regulon and eventually DNA repair. This Marinobacter nauticus (strain ATCC 700491 / DSM 11845 / VT8) (Marinobacter aquaeolei) protein is LexA repressor.